A 224-amino-acid polypeptide reads, in one-letter code: Transcription factor MYB1 (224 aa).

HTH myb-type domains lie at 10-66 and 67-117; these read LGRV…KPSI and KRGH…YKKH. DNA-binding regions (H-T-H motif) lie at residues 38 to 62 and 90 to 113; these read WKRVPERAGLNRCRKSCRWRWLNYL and WSLIAAKLPGRTINDVKNYCNTHL.

The protein resides in the nucleus. Its function is as follows. Activates DODA1 and CYP76AD1 in the betalain red pigment pathway. The sequence is that of Transcription factor MYB1 from Beta vulgaris (Sugar beet).